A 327-amino-acid polypeptide reads, in one-letter code: Thiamine thiazole synthase (327 aa).

Residues cysteine 86, 107–108 (EA), glycine 115, and valine 182 contribute to the substrate site. 2,3-didehydroalanine (Cys) is present on cysteine 216. Substrate-binding positions include aspartate 218, histidine 233, methionine 285, and 295-297 (RMG).

Belongs to the THI4 family. In terms of assembly, homooctamer. The cofactor is Fe cation. In terms of processing, during the catalytic reaction, a sulfide is transferred from Cys-216 to a reaction intermediate, generating a dehydroalanine residue.

It is found in the cytoplasm. Its subcellular location is the nucleus. It carries out the reaction [ADP-thiazole synthase]-L-cysteine + glycine + NAD(+) = [ADP-thiazole synthase]-dehydroalanine + ADP-5-ethyl-4-methylthiazole-2-carboxylate + nicotinamide + 3 H2O + 2 H(+). Involved in biosynthesis of the thiamine precursor thiazole. Catalyzes the conversion of NAD and glycine to adenosine diphosphate 5-(2-hydroxyethyl)-4-methylthiazole-2-carboxylic acid (ADT), an adenylated thiazole intermediate. The reaction includes an iron-dependent sulfide transfer from a conserved cysteine residue of the protein to a thiazole intermediate. The enzyme can only undergo a single turnover, which suggests it is a suicide enzyme. May have additional roles in adaptation to various stress conditions and in DNA damage tolerance. The sequence is that of Thiamine thiazole synthase from Aspergillus oryzae (strain ATCC 42149 / RIB 40) (Yellow koji mold).